Here is a 422-residue protein sequence, read N- to C-terminus: Fasciclin-like arabinogalactan protein 10 (422 aa).

The N-terminal stretch at 1 to 25 is a signal peptide; sequence MATSRAFTLFAFTLSLLTVASTVSG. 2 consecutive FAS1 domains span residues 26-172 and 187-327; these read HNIT…NAPI and GVSN…DNVL. N-linked (GlcNAc...) asparagine glycosylation is found at Asn27, Asn128, Asn162, Asn190, and Asn244. The tract at residues 336 to 397 is disordered; it reads SSSPAPAPEP…PTSSENSNAK (62 aa). Residues 340 to 374 show a composition bias toward pro residues; it reads APAPEPVSAPTPTPAKSPSPVEAPSPTAASPPAPP. Polar residues predominate over residues 386–397; the sequence is DSPTSSENSNAK. Asn398 carries the GPI-anchor amidated asparagine lipid modification. The propeptide at 399-422 is removed in mature form; the sequence is AAFHVNAPALFTALVTIAATSLLL.

It belongs to the fasciclin-like AGP family.

It localises to the cell membrane. In terms of biological role, may be a cell surface adhesion protein. The protein is Fasciclin-like arabinogalactan protein 10 (FLA10) of Arabidopsis thaliana (Mouse-ear cress).